The following is a 1095-amino-acid chain: MSSKETIPMHQRSQNVAELLTVLMDINKINGGDSTTAEKMKVHAKSFEAALFEKSSSKEEYQKTMKSKIDAMRSTRDKRKRESVGSASMMANLGQDGTNNNNNNNNNNNNNLNMAASFMGGDMFGRNQSPAQNSNANTNLNTNVGPGVNGPNGNDGTANPQMFMNQQAQARQQAAARQLKNRQMGGSSAQQQQLTQQQQQLLNQMRVAPIPKELLQRIPNLPPGVTTWEQVTALAQQNRLSAQDMSIAKDIYKIHQQYLIKAKLQQQQQRQQQQRQQGNPDVNNNMAGSNNNNNNNLPMAQQQMQQRQQQQQQSQQQQNRNPNQRHNVLSQINQMFTADEQRALLQEAMEACKNFQKTHFGGQMSDANKQAFIKKFINSKALKKLEAMRMAQGGNNNANLNKGQADMLQRQQANMQMNQQQQRAAQNQRRGPVMNDAVSQGYNNQMNSAADSTMNNSNQPMNIGNNGVNMIPNQSQQQQQTNRPKEQTPQQPQQRIQSNRSVPMLNPTPEDVEVVRRISAEAAKTQLRLTDLTNSLTPQERDEIKKRLQKNQQLFAQVSSYAPQVYLFTKSESFLKEVLQLRIFIKEILEKCSKGIYVVKLDTVDKLVIKYQKYWESMKIQLLRRQQLLQQQQQQQQQGMDPNRAQNSQQQQQQNQANMQQARNRKPTKNQTTPAIAASVAMNMNDKGASMSPALQKAGSAVPNFAQQMSPNMTPGTIPPTNVLSPHSQSHIPMVSPTMAKAASAAALKNDTASSSRRGSTKPRGKSTAPVTGKKTSNAPTPQVVPATVPSTTNLSAAGTPNIRNKSATPLTAGLSPKSTIRSNSNTALASAKTPSPMTVSIPQPGNSSVFKKEEEYLSKLQLRKEEIRFRQKQRLDILSSSPVDLFLTTVADCLGINDEEIELINKIPETTADNINNTGKKKLTKAAQKLRDKEILNVSIQVGEKDKLIMSSKAPDKVMDYSISAMSLAAVFKNLSSTGSLNNIALSGSNATTSKDIGNIYSHTGGVKRKFDEVEISPNSNGSPSASIMSESKKIKIDSPEDMFVTHSSEAAKGTNNSSLMDSGKEGSCKSMAGSATEVNDTSIWDWNFWTSIE.

A compositionally biased stretch (basic and acidic residues) spans 66–83; sequence KSKIDAMRSTRDKRKRES. 6 disordered regions span residues 66-197, 265-323, 448-508, 633-672, 737-847, and 1050-1075; these read KSKI…LTQQ, QQQQ…RNPN, SAAD…LNPT, QQQQQQGMDPNRAQNSQQQQQQNQANMQQARNRKPTKNQT, PTMA…QPGN, and SEAAKGTNNSSLMDSGKEGSCKSMAG. Composition is skewed to low complexity over residues 99–113 and 133–154; these read NNNNNNNNNNNNNLN and NSNANTNLNTNVGPGVNGPNGN. Polar residues predominate over residues 155-165; it reads DGTANPQMFMN. The span at 166-178 shows a compositional bias: low complexity; that stretch reads QQAQARQQAAARQ. Residues 448–473 are compositionally biased toward polar residues; that stretch reads SAADSTMNNSNQPMNIGNNGVNMIPN. 3 stretches are compositionally biased toward low complexity: residues 487–500, 633–662, and 780–793; these read QTPQQPQQRIQSNR, QQQQQQGMDPNRAQNSQQQQQQNQANMQQA, and PTPQVVPATVPSTT. Polar residues-rich tracts occupy residues 794-810, 817-847, and 1050-1062; these read NLSAAGTPNIRNKSATP, PKSTIRSNSNTALASAKTPSPMTVSIPQPGN, and SEAAKGTNNSSLM.

The protein belongs to the Mediator complex subunit 15 family. Component of the Mediator complex.

The protein resides in the nucleus. Component of the Mediator complex, a coactivator involved in regulated gene transcription of nearly all RNA polymerase II-dependent genes. Mediator functions as a bridge to convey information from gene-specific regulatory proteins to the basal RNA polymerase II transcription machinery. Mediator is recruited to promoters by direct interactions with regulatory proteins and serves as a scaffold for the assembly of a functional preinitiation complex with RNA polymerase II and the general transcription factors. The protein is Mediator of RNA polymerase II transcription subunit 15 (GAL11) of Candida glabrata (strain ATCC 2001 / BCRC 20586 / JCM 3761 / NBRC 0622 / NRRL Y-65 / CBS 138) (Yeast).